Consider the following 155-residue polypeptide: Ribonuclease H (155 aa).

The region spanning 4 to 145 (TEPTVYAYTD…ADRLANRGID (142 aa)) is the RNase H type-1 domain. 4 residues coordinate Mg(2+): Asp13, Glu51, Asp73, and Asp137.

It belongs to the RNase H family. Monomer. It depends on Mg(2+) as a cofactor.

It localises to the cytoplasm. It catalyses the reaction Endonucleolytic cleavage to 5'-phosphomonoester.. Functionally, endonuclease that specifically degrades the RNA of RNA-DNA hybrids. This chain is Ribonuclease H, found in Methylococcus capsulatus (strain ATCC 33009 / NCIMB 11132 / Bath).